The primary structure comprises 825 residues: Zygotic DNA replication licensing factor mcm6-B (825 aa).

The segment at 159-186 adopts a C4-type zinc-finger fold; sequence CLDCQTLVRDVEQQFKYTQPSICRNPVC. The MCM domain occupies 347-554; sequence LYHNLCTSLF…TDYAIARRIV (208 aa). 397 to 404 contacts ATP; sequence GDPSTAKS. The short motif at 529-532 is the Arginine finger element; sequence SRFD. The segment covering 668–679 has biased composition (acidic residues); the sequence is DQEDEHEVEEPQ. Positions 668 to 690 are disordered; that stretch reads DQEDEHEVEEPQEGINGDADVPN.

It belongs to the MCM family. As to quaternary structure, component of the mcm2-7 complex (RLF-M). The complex forms a toroidal hexameric ring with the proposed subunit order mcm2-mcm6-mcm4-mcm7-mcm3-mcm5 (By simililarity). Begins to associate with zmcm3, mcm4 and mcm7 into mcm complexes at the neurula stage.

The protein resides in the nucleus. It carries out the reaction ATP + H2O = ADP + phosphate + H(+). Its function is as follows. Acts as a component of the mcm2-7 complex (mcm complex) which is the putative replicative helicase essential for 'once per cell cycle' DNA replication initiation and elongation in eukaryotic cells. The active ATPase sites in the mcm2-7 ring are formed through the interaction surfaces of two neighboring subunits such that a critical structure of a conserved arginine finger motif is provided in trans relative to the ATP-binding site of the Walker A box of the adjacent subunit. The six ATPase active sites, however, are likely to contribute differentially to the complex helicase activity. The existence of maternal and zygotic forms of mcm3 and mcm6 suggests that specific forms of mcm2-7 complexes may be used during different stages of development. May replace mmcm6 in the mcm2-7 complex. The protein is Zygotic DNA replication licensing factor mcm6-B (zmcm6-b) of Xenopus laevis (African clawed frog).